The chain runs to 306 residues: Isoaspartyl peptidase/L-asparaginase (306 aa).

Thr174 serves as the catalytic Nucleophile. Residues 202–205 and 224–227 each bind substrate; these read RIGD and TGKG.

It belongs to the Ntn-hydrolase family. Heterotetramer of two alpha and two beta chains arranged as a dimer of alpha/beta heterodimers. In terms of processing, cleaved into an alpha and beta chain by autocatalysis; this activates the enzyme. The N-terminal residue of the beta subunit is responsible for the nucleophile hydrolase activity. Developing seeds.

It catalyses the reaction Cleavage of a beta-linked Asp residue from the N-terminus of a polypeptide.. Degrades proteins damaged by L-isoaspartyl residue formation (also known as beta-Asp residues). Also has L-asparaginase activity, which is used to liberate stored nitrogen during seed development. This chain is Isoaspartyl peptidase/L-asparaginase, found in Lupinus arboreus (Tree lupine).